The sequence spans 245 residues: Thiopurine S-methyltransferase (245 aa).

29 to 40 (WREKWVDGKIGF) provides a ligand contact to S-adenosyl-L-methionine. Residue F40 participates in substrate binding. N6-acetyllysine is present on K58. Positions 69, 90, and 152 each coordinate S-adenosyl-L-methionine.

This sequence belongs to the class I-like SAM-binding methyltransferase superfamily. TPMT family. Monomer.

The protein resides in the cytoplasm. It carries out the reaction S-adenosyl-L-methionine + a thiopurine = S-adenosyl-L-homocysteine + a thiopurine S-methylether.. The protein is Thiopurine S-methyltransferase (TPMT) of Panthera pardus (Leopard).